We begin with the raw amino-acid sequence, 213 residues long: Uridine kinase (213 aa).

Residue 14-21 (GASASGKS) participates in ATP binding.

It belongs to the uridine kinase family.

It is found in the cytoplasm. The catalysed reaction is uridine + ATP = UMP + ADP + H(+). The enzyme catalyses cytidine + ATP = CMP + ADP + H(+). It participates in pyrimidine metabolism; CTP biosynthesis via salvage pathway; CTP from cytidine: step 1/3. It functions in the pathway pyrimidine metabolism; UMP biosynthesis via salvage pathway; UMP from uridine: step 1/1. The polypeptide is Uridine kinase (Vibrio cholerae serotype O1 (strain ATCC 39315 / El Tor Inaba N16961)).